The chain runs to 261 residues: uncharacterized protein (261 aa).

41 to 48 (GKSGSGKS) serves as a coordination point for ATP.

The protein belongs to the IIV-6 075L family.

This is an uncharacterized protein from Invertebrate iridescent virus 3 (IIV-3).